The sequence spans 226 residues: 7-cyano-7-deazaguanine synthase (226 aa).

8–18 provides a ligand contact to ATP; that stretch reads LSGGLDSTTTL. Residues Cys-188, Cys-198, Cys-201, and Cys-204 each contribute to the Zn(2+) site.

Belongs to the QueC family. Zn(2+) serves as cofactor.

The catalysed reaction is 7-carboxy-7-deazaguanine + NH4(+) + ATP = 7-cyano-7-deazaguanine + ADP + phosphate + H2O + H(+). Its pathway is purine metabolism; 7-cyano-7-deazaguanine biosynthesis. Catalyzes the ATP-dependent conversion of 7-carboxy-7-deazaguanine (CDG) to 7-cyano-7-deazaguanine (preQ(0)). The polypeptide is 7-cyano-7-deazaguanine synthase (Nitrosomonas eutropha (strain DSM 101675 / C91 / Nm57)).